The sequence spans 271 residues: Troponin T, fast skeletal muscle (271 aa).

A compositionally biased stretch (acidic residues) spans 1–21 (MSDEEVEHVEEEYEEEEEAQE). A disordered region spans residues 1–74 (MSDEEVEHVE…EKVDFDDIQK (74 aa)). N-acetylserine is present on Ser-2. Ser-2 is modified (phosphoserine). Composition is skewed to basic and acidic residues over residues 31-53 (PEVH…EKPR) and 62-74 (PEGE…DIQK). The residue at position 90 (Ser-90) is a Phosphoserine. The span at 113–155 (RAERAEQQRIRAEKERERQNRLAEEKARREEEDAKRRAEDDLK) shows a compositional bias: basic and acidic residues. The segment at 113–194 (RAERAEQQRI…REMKKKVLAE (82 aa)) is disordered. 3 positions are modified to phosphoserine: Ser-161, Ser-168, and Ser-169. Basic and acidic residues predominate over residues 183 to 194 (TAREMKKKVLAE). Ser-205 is subject to Phosphoserine. Tyr-221 bears the Phosphotyrosine mark. The segment at 248–271 (IDQAQKHSKKAGTAPKGKVGGRWK) is disordered.

This sequence belongs to the troponin T family.

Its function is as follows. Troponin T is the tropomyosin-binding subunit of troponin, the thin filament regulatory complex which confers calcium-sensitivity to striated muscle actomyosin ATPase activity. The chain is Troponin T, fast skeletal muscle (Tnnt3) from Bos taurus (Bovine).